A 468-amino-acid polypeptide reads, in one-letter code: UDP-N-acetylmuramate--L-alanine ligase (468 aa).

107 to 113 (GTHGKTT) contributes to the ATP binding site.

Belongs to the MurCDEF family.

It localises to the cytoplasm. It carries out the reaction UDP-N-acetyl-alpha-D-muramate + L-alanine + ATP = UDP-N-acetyl-alpha-D-muramoyl-L-alanine + ADP + phosphate + H(+). It functions in the pathway cell wall biogenesis; peptidoglycan biosynthesis. In terms of biological role, cell wall formation. The sequence is that of UDP-N-acetylmuramate--L-alanine ligase from Roseiflexus sp. (strain RS-1).